The chain runs to 382 residues: SAT4 family membrane protein (382 aa).

The interval 1–22 (MFGAELVGRETGGQSTDQPYSY) is disordered. A glycan (N-linked (GlcNAc...) asparagine) is linked at Asn78. 2 consecutive transmembrane segments (helical) span residues 80–100 (SQILYAPLIFVTKLSIFLLYL) and 112–132 (YLSIHLLIWFNLAFYLANFFL). Residue Asn147 is glycosylated (N-linked (GlcNAc...) asparagine). Helical transmembrane passes span 159–179 (ILVTAAINVVSDLLMLCLPII), 192–212 (LGISAIFAAGIFGCFASIMRL), and 228–248 (WYTEITCGILASCLPALPTFF). N-linked (GlcNAc...) asparagine glycosylation is present at Asn269.

This sequence belongs to the SAT4 family.

It is found in the membrane. The chain is SAT4 family membrane protein from Emericella nidulans (strain FGSC A4 / ATCC 38163 / CBS 112.46 / NRRL 194 / M139) (Aspergillus nidulans).